A 434-amino-acid chain; its full sequence is G2/mitotic-specific cyclin-2 (434 aa).

This sequence belongs to the cyclin family. Cyclin AB subfamily. In terms of assembly, interacts with the CDC2 protein kinase to form a serine/threonine kinase holoenzyme complex also known as maturation promoting factor (MPF). The cyclin subunit imparts substrate specificity to the complex.

In terms of biological role, essential for the control of the cell cycle at the G2/M (mitosis) transition. The protein is G2/mitotic-specific cyclin-2 of Medicago sativa subsp. varia (Alfalfa).